The primary structure comprises 952 residues: Glycine dehydrogenase (decarboxylating) (952 aa).

Lys703 is modified (N6-(pyridoxal phosphate)lysine).

It belongs to the GcvP family. In terms of assembly, the glycine cleavage system is composed of four proteins: P, T, L and H. It depends on pyridoxal 5'-phosphate as a cofactor.

It carries out the reaction N(6)-[(R)-lipoyl]-L-lysyl-[glycine-cleavage complex H protein] + glycine + H(+) = N(6)-[(R)-S(8)-aminomethyldihydrolipoyl]-L-lysyl-[glycine-cleavage complex H protein] + CO2. In terms of biological role, the glycine cleavage system catalyzes the degradation of glycine. The P protein binds the alpha-amino group of glycine through its pyridoxal phosphate cofactor; CO(2) is released and the remaining methylamine moiety is then transferred to the lipoamide cofactor of the H protein. This chain is Glycine dehydrogenase (decarboxylating), found in Mycobacterium leprae (strain Br4923).